Reading from the N-terminus, the 327-residue chain is Protoheme IX farnesyltransferase (327 aa).

Transmembrane regions (helical) follow at residues 55–75 (LVCT…LNCL), 101–121 (AAFV…VSGV), 124–144 (LAAG…TALL), 152–172 (IVVG…AATG), 180–200 (WLFA…ALLL), 237–257 (FLGI…ILPF), and 278–298 (AKGL…LLVM).

Belongs to the UbiA prenyltransferase family. Protoheme IX farnesyltransferase subfamily.

It localises to the cell inner membrane. The enzyme catalyses heme b + (2E,6E)-farnesyl diphosphate + H2O = Fe(II)-heme o + diphosphate. The protein operates within porphyrin-containing compound metabolism; heme O biosynthesis; heme O from protoheme: step 1/1. In terms of biological role, converts heme B (protoheme IX) to heme O by substitution of the vinyl group on carbon 2 of heme B porphyrin ring with a hydroxyethyl farnesyl side group. The sequence is that of Protoheme IX farnesyltransferase from Synechococcus sp. (strain CC9311).